The following is a 115-amino-acid chain: ATP-dependent Clp protease adapter protein ClpS (115 aa).

The protein belongs to the ClpS family. As to quaternary structure, binds to the N-terminal domain of the chaperone ClpA.

Functionally, involved in the modulation of the specificity of the ClpAP-mediated ATP-dependent protein degradation. In Leptothrix cholodnii (strain ATCC 51168 / LMG 8142 / SP-6) (Leptothrix discophora (strain SP-6)), this protein is ATP-dependent Clp protease adapter protein ClpS.